We begin with the raw amino-acid sequence, 516 residues long: D-aminopeptidase (516 aa).

Ser61 serves as the catalytic Nucleophile. Lys64 functions as the Proton donor/acceptor in the catalytic mechanism. The interval 476–486 (RRSMDAPAPGD) is important for specificity. Asp480 is a binding site for substrate.

Belongs to the peptidase S12 family. As to quaternary structure, homodimer.

The enzyme catalyses Release of an N-terminal D-amino acid from a peptide, Xaa-|-Yaa-, in which Xaa is preferably D-Ala, D-Ser or D-Thr. D-amino acid amides and methyl esters also are hydrolyzed, as is glycine amide.. Its activity is regulated as follows. Inhibited by beta-lactam compounds such as 6-aminopenicillic acid, 7-aminocephalosporanic acid, benzylpenicillin and ampicillin. Inhibited by p-chloromercuribenzoate. In terms of biological role, hydrolyzes N-terminal residues in D-amino acid-containing peptides. The polypeptide is D-aminopeptidase (Cereibacter sphaeroides (strain ATCC 17023 / DSM 158 / JCM 6121 / CCUG 31486 / LMG 2827 / NBRC 12203 / NCIMB 8253 / ATH 2.4.1.) (Rhodobacter sphaeroides)).